We begin with the raw amino-acid sequence, 115 residues long: NAD(P)H-quinone oxidoreductase subunit M (115 aa).

The protein belongs to the complex I NdhM subunit family. In terms of assembly, NDH-1 can be composed of about 15 different subunits; different subcomplexes with different compositions have been identified which probably have different functions.

Its subcellular location is the cellular thylakoid membrane. The enzyme catalyses a plastoquinone + NADH + (n+1) H(+)(in) = a plastoquinol + NAD(+) + n H(+)(out). The catalysed reaction is a plastoquinone + NADPH + (n+1) H(+)(in) = a plastoquinol + NADP(+) + n H(+)(out). Its function is as follows. NDH-1 shuttles electrons from an unknown electron donor, via FMN and iron-sulfur (Fe-S) centers, to quinones in the respiratory and/or the photosynthetic chain. The immediate electron acceptor for the enzyme in this species is believed to be plastoquinone. Couples the redox reaction to proton translocation, and thus conserves the redox energy in a proton gradient. Cyanobacterial NDH-1 also plays a role in inorganic carbon-concentration. In Prochlorococcus marinus (strain MIT 9301), this protein is NAD(P)H-quinone oxidoreductase subunit M.